Here is a 182-residue protein sequence, read N- to C-terminus: ATP synthase subunit delta, mitochondrial (182 aa).

A mitochondrion-targeting transit peptide spans methionine 1–leucine 17.

The protein belongs to the ATPase epsilon chain family. F-type ATPases have 2 components, F(1) - the catalytic core - and F(o) - the membrane proton channel. F(1) has five subunits: alpha(3), beta(3), gamma(1), delta(1), epsilon(1), plus the additional subunit P18 (Tb427.05.1710) that is not present in F(1)F(o) ATP synthase from metazoa. Subunit P18 (Tb927.5.1710) interacts with the alpha subunit with a 1:1 stoichiometry; the interaction is direct. Subunit gamma is part of the central stalk. F(o) has three main subunits: a, b and c. The trypanosomal ATPase complex contains additional subunits that are not present in the F(1)F(o) ATP synthase from metazoa.

It localises to the mitochondrion. Its subcellular location is the mitochondrion inner membrane. Mitochondrial membrane ATP synthase (F(1)F(o) ATP synthase) produces ATP from ADP in the presence of a proton gradient across the membrane which is generated by electron transport complexes of the respiratory chain. F-type ATPases consist of two structural domains, F(1) - containing the extramembraneous catalytic core, and F(o) - containing the membrane proton channel, linked together by a central stalk and a peripheral stalk. During catalysis, ATP synthesis in the catalytic domain of F(1) is coupled via a rotary mechanism of the central stalk subunits to proton translocation. Subunits alpha and beta form the catalytic core in F(1). Rotation of the central stalk against the surrounding alpha(3)beta(3) subunits leads to hydrolysis of ATP in three separate catalytic sites on the beta subunits. Contrary to the procyclic, insect form that requires F(1)F(o) ATP synthase for ATP synthesis, the bloodstream form relies on ATP hydrolysis by F(1)F(o) ATP synthase to maintain its mitochondrial membrane potential. The polypeptide is ATP synthase subunit delta, mitochondrial (Trypanosoma brucei brucei).